A 728-amino-acid chain; its full sequence is Polyphosphate kinase (728 aa).

Residue N57 coordinates ATP. Positions 408 and 438 each coordinate Mg(2+). H468 (phosphohistidine intermediate) is an active-site residue. 3 residues coordinate ATP: Y501, R597, and H625. The interval 694-728 (VQRRPASPEQSQSSQAIFTAQAIAETTEDPELRSV) is disordered. The segment covering 695-709 (QRRPASPEQSQSSQA) has biased composition (low complexity).

This sequence belongs to the polyphosphate kinase 1 (PPK1) family. Mg(2+) is required as a cofactor. An intermediate of this reaction is the autophosphorylated ppk in which a phosphate is covalently linked to a histidine residue through a N-P bond.

The catalysed reaction is [phosphate](n) + ATP = [phosphate](n+1) + ADP. Functionally, catalyzes the reversible transfer of the terminal phosphate of ATP to form a long-chain polyphosphate (polyP). The protein is Polyphosphate kinase of Synechocystis sp. (strain ATCC 27184 / PCC 6803 / Kazusa).